We begin with the raw amino-acid sequence, 346 residues long: Putative isoaspartyl peptidase/L-asparaginase (346 aa).

The Nucleophile role is filled by Thr-207. Substrate-binding positions include 235 to 238 (RVGD) and 257 to 260 (TGTG).

The protein belongs to the Ntn-hydrolases family. Heterodimer of an alpha and beta chain produced by autocleavage. Cleaved into an alpha and beta chain by autocatalysis; this activates the enzyme. The N-terminal residue of the beta subunit is responsible for the nucleophile hydrolase activity.

The enzyme catalyses Cleavage of a beta-linked Asp residue from the N-terminus of a polypeptide.. The catalysed reaction is L-asparagine + H2O = L-aspartate + NH4(+). In terms of biological role, has both L-asparaginase and beta-aspartyl peptidase activity. Does not have aspartylglucosaminidase activity and is inactive toward GlcNAc-L-Asn. Likewise, has no activity toward glutamine. In Dictyostelium discoideum (Social amoeba), this protein is Putative isoaspartyl peptidase/L-asparaginase.